The sequence spans 92 residues: Small ribosomal subunit protein bS18 (92 aa).

It belongs to the bacterial ribosomal protein bS18 family. As to quaternary structure, part of the 30S ribosomal subunit. Forms a tight heterodimer with protein bS6.

Its function is as follows. Binds as a heterodimer with protein bS6 to the central domain of the 16S rRNA, where it helps stabilize the platform of the 30S subunit. The polypeptide is Small ribosomal subunit protein bS18 (Cupriavidus taiwanensis (strain DSM 17343 / BCRC 17206 / CCUG 44338 / CIP 107171 / LMG 19424 / R1) (Ralstonia taiwanensis (strain LMG 19424))).